The chain runs to 227 residues: 7-cyano-7-deazaguanine synthase (227 aa).

Residue 16–26 participates in ATP binding; sequence FSGGQDSTTCL. Zn(2+)-binding residues include Cys-194, Cys-202, Cys-205, and Cys-208.

The protein belongs to the QueC family. Zn(2+) is required as a cofactor.

The enzyme catalyses 7-carboxy-7-deazaguanine + NH4(+) + ATP = 7-cyano-7-deazaguanine + ADP + phosphate + H2O + H(+). The protein operates within purine metabolism; 7-cyano-7-deazaguanine biosynthesis. Functionally, catalyzes the ATP-dependent conversion of 7-carboxy-7-deazaguanine (CDG) to 7-cyano-7-deazaguanine (preQ(0)). The polypeptide is 7-cyano-7-deazaguanine synthase (Haemophilus influenzae (strain 86-028NP)).